A 448-amino-acid polypeptide reads, in one-letter code: UDP-N-acetylmuramate--L-alanine ligase (448 aa).

Position 118 to 124 (118 to 124 (GTHGKTT)) interacts with ATP.

This sequence belongs to the MurCDEF family.

The protein localises to the cytoplasm. It catalyses the reaction UDP-N-acetyl-alpha-D-muramate + L-alanine + ATP = UDP-N-acetyl-alpha-D-muramoyl-L-alanine + ADP + phosphate + H(+). It functions in the pathway cell wall biogenesis; peptidoglycan biosynthesis. Cell wall formation. The polypeptide is UDP-N-acetylmuramate--L-alanine ligase (Flavobacterium psychrophilum (strain ATCC 49511 / DSM 21280 / CIP 103535 / JIP02/86)).